The following is a 103-amino-acid chain: Large ribosomal subunit protein bL21 (103 aa).

It belongs to the bacterial ribosomal protein bL21 family. As to quaternary structure, part of the 50S ribosomal subunit. Contacts protein L20.

Its function is as follows. This protein binds to 23S rRNA in the presence of protein L20. This is Large ribosomal subunit protein bL21 from Erwinia tasmaniensis (strain DSM 17950 / CFBP 7177 / CIP 109463 / NCPPB 4357 / Et1/99).